We begin with the raw amino-acid sequence, 372 residues long: Cell division protein FtsZ 1 (372 aa).

GTP-binding positions include 51 to 55 (GAGCN), 138 to 140 (GTG), E169, R173, and D216. Residues 350 to 360 (PEEETPLETPE) are compositionally biased toward acidic residues. A disordered region spans residues 350–372 (PEEETPLETPEESPSIEISIPEL). A compositionally biased stretch (low complexity) spans 361–372 (ESPSIEISIPEL).

It belongs to the FtsZ family. As to quaternary structure, homodimer. Polymerizes to form a dynamic ring structure in a strictly GTP-dependent manner. Interacts directly with several other division proteins.

The protein localises to the cytoplasm. Essential cell division protein that forms a contractile ring structure (Z ring) at the future cell division site. The regulation of the ring assembly controls the timing and the location of cell division. One of the functions of the FtsZ ring is to recruit other cell division proteins to the septum to produce a new cell wall between the dividing cells. Binds GTP and shows GTPase activity. This chain is Cell division protein FtsZ 1, found in Pyrococcus furiosus (strain ATCC 43587 / DSM 3638 / JCM 8422 / Vc1).